The chain runs to 553 residues: Terpene synthase 16 (553 aa).

Mg(2+) contacts are provided by Asp303, Asp307, and Glu457. Positions 303–307 (DDTYD) match the DDXXD motif motif.

The protein belongs to the terpene synthase family. Tpsa subfamily. The cofactor is Mg(2+). Mn(2+) is required as a cofactor. As to expression, expressed in leaves, trichomes and flowers.

It participates in secondary metabolite biosynthesis; terpenoid biosynthesis. Its function is as follows. Sesquiterpene synthase involved in the biosynthesis of volatile compounds. No activity detected with geranyl diphosphate (GPP) and farnesyl diphosphate (FPP) as substrates. The sequence is that of Terpene synthase 16 from Solanum lycopersicum (Tomato).